Consider the following 89-residue polypeptide: HssA/B-like protein 15 (89 aa).

Belongs to the hssA/B family.

This Dictyostelium discoideum (Social amoeba) protein is HssA/B-like protein 15 (hssl15).